The sequence spans 245 residues: MKRVAAVIEYDGSNFFGYQGQPDVRTVQGVIEDALERIFKQRIYTQAAGRTDTGVHANGQLIAFNCPNDRMTTEDIRNAMNANLPDDVYVKEVFEVPVNFHPRFDVTKRIYHYFILTSRQKNVFLRKYVWWFPYELDLDAMRKAVKYLEGTHDFTSFKTGSDERDPVRTIYRIRILRLKNDLVLIRVEGRSFLRRMVRNIVAALVKVGLKQWEPEKMKEVLEARDRSAAAGTAPAHGLYFYKVLF.

Catalysis depends on Asp52, which acts as the Nucleophile. Position 111 (Tyr111) interacts with substrate.

It belongs to the tRNA pseudouridine synthase TruA family. Homodimer.

The catalysed reaction is uridine(38/39/40) in tRNA = pseudouridine(38/39/40) in tRNA. Functionally, formation of pseudouridine at positions 38, 39 and 40 in the anticodon stem and loop of transfer RNAs. This chain is tRNA pseudouridine synthase A, found in Thermotoga maritima (strain ATCC 43589 / DSM 3109 / JCM 10099 / NBRC 100826 / MSB8).